A 490-amino-acid polypeptide reads, in one-letter code: Betaine aldehyde dehydrogenase (490 aa).

N93 provides a ligand contact to K(+). 150–152 (GAW) contacts NAD(+). K162 acts as the Charge relay system in catalysis. 176-179 (KPSE) serves as a coordination point for NAD(+). V180 is a binding site for K(+). 230-233 (GTAT) contacts NAD(+). Position 246 (L246) interacts with K(+). The active-site Proton acceptor is E252. Positions 254, 286, and 387 each coordinate NAD(+). C286 (nucleophile) is an active-site residue. A Cysteine sulfenic acid (-SOH) modification is found at C286. Positions 457 and 460 each coordinate K(+). E464 acts as the Charge relay system in catalysis.

It belongs to the aldehyde dehydrogenase family. As to quaternary structure, dimer of dimers. The cofactor is K(+).

It carries out the reaction betaine aldehyde + NAD(+) + H2O = glycine betaine + NADH + 2 H(+). The protein operates within amine and polyamine biosynthesis; betaine biosynthesis via choline pathway; betaine from betaine aldehyde: step 1/1. Its function is as follows. Involved in the biosynthesis of the osmoprotectant glycine betaine. Catalyzes the irreversible oxidation of betaine aldehyde to the corresponding acid. The sequence is that of Betaine aldehyde dehydrogenase from Xanthomonas euvesicatoria pv. vesicatoria (strain 85-10) (Xanthomonas campestris pv. vesicatoria).